The following is a 551-amino-acid chain: Terpene synthase 10 (551 aa).

Residues aspartate 303, aspartate 307, and glutamate 455 each coordinate Mg(2+). The DDXXD motif signature appears at 303–307; sequence DDIYD.

This sequence belongs to the terpene synthase family. Mg(2+) serves as cofactor.

Functionally, catalyzes the cyclization of farnesyl diphosphate to sesquiterpene olefins. This is Terpene synthase 10 (TPS10) from Ricinus communis (Castor bean).